Consider the following 360-residue polypeptide: Lipid-A-disaccharide synthase (360 aa).

Belongs to the LpxB family.

The enzyme catalyses a lipid X + a UDP-2-N,3-O-bis[(3R)-3-hydroxyacyl]-alpha-D-glucosamine = a lipid A disaccharide + UDP + H(+). It functions in the pathway bacterial outer membrane biogenesis; LPS lipid A biosynthesis. Functionally, condensation of UDP-2,3-diacylglucosamine and 2,3-diacylglucosamine-1-phosphate to form lipid A disaccharide, a precursor of lipid A, a phosphorylated glycolipid that anchors the lipopolysaccharide to the outer membrane of the cell. This chain is Lipid-A-disaccharide synthase, found in Helicobacter pylori (strain Shi470).